Consider the following 173-residue polypeptide: 2-C-methyl-D-erythritol 2,4-cyclodiphosphate synthase (173 aa).

Residues Asp-17 and His-19 each contribute to the a divalent metal cation site. Residues 17-19 (DVH) and 49-50 (HS) contribute to the 4-CDP-2-C-methyl-D-erythritol 2-phosphate site. A divalent metal cation is bound at residue His-57. Residues 76-80 (FPNTD), 147-150 (TTTE), and Arg-157 each bind 4-CDP-2-C-methyl-D-erythritol 2-phosphate.

This sequence belongs to the IspF family. Homotrimer. Requires a divalent metal cation as cofactor.

It catalyses the reaction 4-CDP-2-C-methyl-D-erythritol 2-phosphate = 2-C-methyl-D-erythritol 2,4-cyclic diphosphate + CMP. It functions in the pathway isoprenoid biosynthesis; isopentenyl diphosphate biosynthesis via DXP pathway; isopentenyl diphosphate from 1-deoxy-D-xylulose 5-phosphate: step 4/6. Involved in the biosynthesis of isopentenyl diphosphate (IPP) and dimethylallyl diphosphate (DMAPP), two major building blocks of isoprenoid compounds. Catalyzes the conversion of 4-diphosphocytidyl-2-C-methyl-D-erythritol 2-phosphate (CDP-ME2P) to 2-C-methyl-D-erythritol 2,4-cyclodiphosphate (ME-CPP) with a corresponding release of cytidine 5-monophosphate (CMP). The chain is 2-C-methyl-D-erythritol 2,4-cyclodiphosphate synthase from Ehrlichia ruminantium (strain Welgevonden).